Reading from the N-terminus, the 2561-residue chain is Plipastatin synthase subunit A (2561 aa).

The domain 1 (glutamate-activating) stretch occupies residues 1–1038 (MSEHTYSLTH…ATVIREGTDS (1038 aa)). A condensation 1 region spans residues 2 to 300 (SEHTYSLTHA…SSLPIRITVD (299 aa)). The adenylation 1 stretch occupies residues 485–888 (TYAELDMYAS…SIEGVREAAV (404 aa)). Positions 961–1036 (APRNVTEMKL…GLATVIREGT (76 aa)) constitute a Carrier 1 domain. S996 carries the post-translational modification O-(pantetheine 4'-phosphoryl)serine. The segment at 1048 to 1338 (KQETYPVSSA…NTLALRTRPE (291 aa)) is condensation 2. A domain 2 (D-ornithine-activating) region spans residues 1048–2554 (KQETYPVSSA…ELTLSALSSI (1507 aa)). Positions 1525–1932 (SYRLLNERAN…QTGLVREAAV (408 aa)) are adenylation 2. Positions 2007–2081 (APVNDLQKTM…ELCGHITPLA (75 aa)) constitute a Carrier 2 domain. S2042 carries the O-(pantetheine 4'-phosphoryl)serine modification. The tract at residues 2089 to 2554 (AEGEAELTPI…ELTLSALSSI (466 aa)) is epimerization.

This sequence belongs to the ATP-dependent AMP-binding enzyme family. Pantetheine 4'-phosphate serves as cofactor.

In terms of biological role, this protein is a multifunctional enzyme, able to activate and polymerize the amino acids Glu and Orn as part of the biosynthesis of the lipopeptide antibiotic lipastatin. The Orn residue is further epimerized to the D-isomer form. The activation sites for these amino acids consist of individual domains. The polypeptide is Plipastatin synthase subunit A (ppsA) (Bacillus subtilis (strain 168)).